A 145-amino-acid chain; its full sequence is Putative pre-16S rRNA nuclease (145 aa).

The protein belongs to the YqgF nuclease family.

The protein localises to the cytoplasm. Could be a nuclease involved in processing of the 5'-end of pre-16S rRNA. This chain is Putative pre-16S rRNA nuclease, found in Thiobacillus denitrificans (strain ATCC 25259 / T1).